The chain runs to 639 residues: tRNA uridine 5-carboxymethylaminomethyl modification enzyme MnmG (639 aa).

Position 13–18 (13–18 (GGGHAG)) interacts with FAD. Residue 274 to 288 (GPRYCPSIEDKIHRF) participates in NAD(+) binding.

The protein belongs to the MnmG family. Homodimer. Heterotetramer of two MnmE and two MnmG subunits. FAD serves as cofactor.

Its subcellular location is the cytoplasm. In terms of biological role, NAD-binding protein involved in the addition of a carboxymethylaminomethyl (cmnm) group at the wobble position (U34) of certain tRNAs, forming tRNA-cmnm(5)s(2)U34. This is tRNA uridine 5-carboxymethylaminomethyl modification enzyme MnmG from Polynucleobacter asymbioticus (strain DSM 18221 / CIP 109841 / QLW-P1DMWA-1) (Polynucleobacter necessarius subsp. asymbioticus).